Here is a 454-residue protein sequence, read N- to C-terminus: Bifunctional protein GlmU (454 aa).

Residues 1-226 (MALNVVILAA…AIEVEGANNR (226 aa)) are pyrophosphorylase. UDP-N-acetyl-alpha-D-glucosamine is bound by residues 8 to 11 (LAAG), K22, Q73, 78 to 79 (GT), 100 to 102 (YGD), G137, E151, N166, and N224. Residue D102 coordinates Mg(2+). N224 is a binding site for Mg(2+). The linker stretch occupies residues 227-247 (VQLAQLERAYQAREAEKLMIA). Positions 248–454 (GANLRDPSRI…GWQRPVKIKK (207 aa)) are N-acetyltransferase. UDP-N-acetyl-alpha-D-glucosamine is bound by residues R330 and K348. Residue H360 is the Proton acceptor of the active site. Y363 and N374 together coordinate UDP-N-acetyl-alpha-D-glucosamine. Acetyl-CoA-binding positions include A377, 383-384 (NY), S402, A420, and R437.

This sequence in the N-terminal section; belongs to the N-acetylglucosamine-1-phosphate uridyltransferase family. It in the C-terminal section; belongs to the transferase hexapeptide repeat family. As to quaternary structure, homotrimer. Mg(2+) serves as cofactor.

The protein resides in the cytoplasm. It carries out the reaction alpha-D-glucosamine 1-phosphate + acetyl-CoA = N-acetyl-alpha-D-glucosamine 1-phosphate + CoA + H(+). The catalysed reaction is N-acetyl-alpha-D-glucosamine 1-phosphate + UTP + H(+) = UDP-N-acetyl-alpha-D-glucosamine + diphosphate. Its pathway is nucleotide-sugar biosynthesis; UDP-N-acetyl-alpha-D-glucosamine biosynthesis; N-acetyl-alpha-D-glucosamine 1-phosphate from alpha-D-glucosamine 6-phosphate (route II): step 2/2. The protein operates within nucleotide-sugar biosynthesis; UDP-N-acetyl-alpha-D-glucosamine biosynthesis; UDP-N-acetyl-alpha-D-glucosamine from N-acetyl-alpha-D-glucosamine 1-phosphate: step 1/1. It participates in bacterial outer membrane biogenesis; LPS lipid A biosynthesis. Catalyzes the last two sequential reactions in the de novo biosynthetic pathway for UDP-N-acetylglucosamine (UDP-GlcNAc). The C-terminal domain catalyzes the transfer of acetyl group from acetyl coenzyme A to glucosamine-1-phosphate (GlcN-1-P) to produce N-acetylglucosamine-1-phosphate (GlcNAc-1-P), which is converted into UDP-GlcNAc by the transfer of uridine 5-monophosphate (from uridine 5-triphosphate), a reaction catalyzed by the N-terminal domain. This chain is Bifunctional protein GlmU, found in Shewanella sp. (strain MR-4).